Reading from the N-terminus, the 134-residue chain is Ribosome-binding factor A (134 aa).

This sequence belongs to the RbfA family. As to quaternary structure, monomer. Binds 30S ribosomal subunits, but not 50S ribosomal subunits or 70S ribosomes.

Its subcellular location is the cytoplasm. In terms of biological role, one of several proteins that assist in the late maturation steps of the functional core of the 30S ribosomal subunit. Associates with free 30S ribosomal subunits (but not with 30S subunits that are part of 70S ribosomes or polysomes). Required for efficient processing of 16S rRNA. May interact with the 5'-terminal helix region of 16S rRNA. The sequence is that of Ribosome-binding factor A from Bdellovibrio bacteriovorus (strain ATCC 15356 / DSM 50701 / NCIMB 9529 / HD100).